The chain runs to 180 residues: Large ribosomal subunit protein uL6 (180 aa).

The protein belongs to the universal ribosomal protein uL6 family. As to quaternary structure, part of the 50S ribosomal subunit.

This protein binds to the 23S rRNA, and is important in its secondary structure. It is located near the subunit interface in the base of the L7/L12 stalk, and near the tRNA binding site of the peptidyltransferase center. This chain is Large ribosomal subunit protein uL6, found in Cutibacterium acnes (strain DSM 16379 / KPA171202) (Propionibacterium acnes).